The following is a 100-amino-acid chain: Small ribosomal subunit protein uS14c (100 aa).

It belongs to the universal ribosomal protein uS14 family. In terms of assembly, part of the 30S ribosomal subunit.

Its subcellular location is the plastid. It localises to the chloroplast. Binds 16S rRNA, required for the assembly of 30S particles. The protein is Small ribosomal subunit protein uS14c of Illicium oligandrum (Star anise).